A 235-amino-acid polypeptide reads, in one-letter code: CD-NTase-associated protein 13 (235 aa).

A run of 2 helical transmembrane segments spans residues 14–34 (IVHH…LIWI) and 45–65 (IIFT…IVGL).

The protein in the C-terminal section; belongs to the bacterial STING family. Homodimer.

Its subcellular location is the cell inner membrane. Its function is as follows. Effector protein of a CBASS antivirus system. CBASS (cyclic oligonucleotide-based antiphage signaling system) provides immunity against bacteriophage. The CD-NTase protein synthesizes cyclic nucleotides in response to infection; these serve as specific second messenger signals. The signals activate a diverse range of effectors, leading to bacterial cell death and thus abortive phage infection. A type I-D(GG) CBASS system. Binds cyclic dinucleotides: binds c-di-GMP (synthesized by the cognate CdnE encoded upstream in the same operon), cyclic 3'3'-cyclic GMP-AMP (3'3'-cGAMP) but not cUMP-AMP. The effector protein for this CBASS system, its activity is stimulated by c-di-GMP and leads to cell death. This is CD-NTase-associated protein 13 from Flavobacteriaceae sp. genome_bin_11.